A 424-amino-acid polypeptide reads, in one-letter code: Histidine--tRNA ligase (424 aa).

It belongs to the class-II aminoacyl-tRNA synthetase family. In terms of assembly, homodimer.

It is found in the cytoplasm. It carries out the reaction tRNA(His) + L-histidine + ATP = L-histidyl-tRNA(His) + AMP + diphosphate + H(+). This Pediococcus pentosaceus (strain ATCC 25745 / CCUG 21536 / LMG 10740 / 183-1w) protein is Histidine--tRNA ligase.